The chain runs to 147 residues: MSAVAPQKNVVQTHGKKRTAVAVAYATNGKGLIKVNGVPLEFIQPKNLKLKVYEPVLIVGKDVFSQVDIRVRVRGGGSVAQIYAIRQAIAKSIVAYHQKYVDEESKNEIKKKILDYDRSLLVADPRRCEPKKFGGRGARARFQKSYR.

Belongs to the universal ribosomal protein uS9 family.

The chain is Small ribosomal subunit protein uS9 (rps16) from Dictyostelium discoideum (Social amoeba).